The chain runs to 498 residues: ADP,ATP carrier protein 1 (498 aa).

Over 1-33 (MSTTKSDNYISELRKVIWPIERYENKKFLPMAF) the chain is Cytoplasmic. A helical membrane pass occupies residues 34 to 54 (MMFCILLNYSTLRSIKDGFVV). An intrachain disulfide couples cysteine 37 to cysteine 85. Over 55-67 (TDIGAEAISFLKT) the chain is Extracellular. Residues 68-88 (YIVLPSAVIAMIVYVKLCDIL) traverse the membrane as a helical segment. Topologically, residues 89–92 (KQEN) are cytoplasmic. The chain crosses the membrane as a helical span at residues 93 to 113 (VFYVITSFFLAYFALFAFVLY). Residues 114 to 147 (PNPDLVHPNPEAIESLSLAYPNFKWFIRIVGKWS) are Extracellular-facing. Residues 148–168 (FASFYTMAELWGTLMLSLLFW) traverse the membrane as a helical segment. Topologically, residues 169 to 184 (QFANQITKTDEAKRFY) are cytoplasmic. The chain crosses the membrane as a helical span at residues 185-205 (SMFGLLANLALPVTSLIIGYF). Residues 206–218 (LHEKTQIVAEHLK) lie on the Extracellular side of the membrane. The helical transmembrane segment at 219 to 239 (FTPLFVIMIISSLAVILTYRW) threads the bilayer. The Cytoplasmic portion of the chain corresponds to 240–279 (MNKNVLTDPKLYDPALVKGKKAKAKMSLIESFKMIFTSKY). Residues 280–300 (VGYIALLLIAYGISVNLVEGV) traverse the membrane as a helical segment. Residues 301-320 (WKSKLKELHPTKEAYTMYMG) lie on the Extracellular side of the membrane. The helical transmembrane segment at 321–341 (QFQAYQGWVAIAFMIIGSNIL) threads the bilayer. The Cytoplasmic portion of the chain corresponds to 342–348 (RKVSWLT). The helical transmembrane segment at 349 to 369 (AAMITPLMMLITGIAFFAFIF) threads the bilayer. Over 370–379 (FDSVIAMYLT) the chain is Extracellular. A helical transmembrane segment spans residues 380 to 400 (GILASGPLALAVMIGTIQNVL). Residues 401-438 (SKGVKYSLFDATKNMAYIPLDKDLRVKGQAAVEVIGGR) lie on the Cytoplasmic side of the membrane. 436-442 (GGRFGKS) serves as a coordination point for ATP. Residues 439–459 (FGKSGGAIIQSTFFIIFPALG) form a helical membrane-spanning segment. Residues 460 to 465 (FVEATP) are Extracellular-facing. The chain crosses the membrane as a helical span at residues 466-486 (YFASIFFVIVILWIYAVKGLN). Residues 487–498 (KEYQVLVNNTEK) lie on the Cytoplasmic side of the membrane.

This sequence belongs to the ADP/ATP translocase tlc family.

The protein localises to the cell membrane. In terms of biological role, provides the rickettsial cell with host ATP in exchange for rickettsial ADP. This is an obligate exchange system. This energy acquiring activity is an important component of rickettsial parasitism. This chain is ADP,ATP carrier protein 1 (tlcA), found in Rickettsia bellii (strain RML369-C).